A 156-amino-acid chain; its full sequence is Transcriptional repressor NrdR (156 aa).

A zinc finger spans residues 3 to 34; it reads CPFCHSDNDKVQDSRTAEAGYVVRRKRLCQTC. Positions 49-139 constitute an ATP-cone domain; sequence VRVVKSDETR…VYRDFDDAKD (91 aa).

Belongs to the NrdR family. The cofactor is Zn(2+).

Functionally, negatively regulates transcription of bacterial ribonucleotide reductase nrd genes and operons by binding to NrdR-boxes. This is Transcriptional repressor NrdR from Rhodopirellula baltica (strain DSM 10527 / NCIMB 13988 / SH1).